A 97-amino-acid chain; its full sequence is Large ribosomal subunit protein bL28 (97 aa).

This sequence belongs to the bacterial ribosomal protein bL28 family.

The protein is Large ribosomal subunit protein bL28 of Brucella ovis (strain ATCC 25840 / 63/290 / NCTC 10512).